A 173-amino-acid chain; its full sequence is Alkyl hydroperoxide reductase AhpD (173 aa).

Cys131 functions as the Proton donor in the catalytic mechanism. The cysteines at positions 131 and 134 are disulfide-linked. The active-site Cysteine sulfenic acid (-SOH) intermediate is Cys134.

This sequence belongs to the AhpD family.

The catalysed reaction is N(6)-[(R)-dihydrolipoyl]-L-lysyl-[lipoyl-carrier protein] + a hydroperoxide = N(6)-[(R)-lipoyl]-L-lysyl-[lipoyl-carrier protein] + an alcohol + H2O. Antioxidant protein with alkyl hydroperoxidase activity. Required for the reduction of the AhpC active site cysteine residues and for the regeneration of the AhpC enzyme activity. The chain is Alkyl hydroperoxide reductase AhpD from Maricaulis maris (strain MCS10) (Caulobacter maris).